Consider the following 302-residue polypeptide: Ribosomal RNA small subunit methyltransferase A (302 aa).

6 residues coordinate S-adenosyl-L-methionine: Asn-27, Leu-29, Gly-54, Glu-75, Asp-100, and Asn-138.

It belongs to the class I-like SAM-binding methyltransferase superfamily. rRNA adenine N(6)-methyltransferase family. RsmA subfamily.

The protein localises to the cytoplasm. The enzyme catalyses adenosine(1518)/adenosine(1519) in 16S rRNA + 4 S-adenosyl-L-methionine = N(6)-dimethyladenosine(1518)/N(6)-dimethyladenosine(1519) in 16S rRNA + 4 S-adenosyl-L-homocysteine + 4 H(+). In terms of biological role, specifically dimethylates two adjacent adenosines (A1518 and A1519) in the loop of a conserved hairpin near the 3'-end of 16S rRNA in the 30S particle. May play a critical role in biogenesis of 30S subunits. The sequence is that of Ribosomal RNA small subunit methyltransferase A from Natranaerobius thermophilus (strain ATCC BAA-1301 / DSM 18059 / JW/NM-WN-LF).